The following is a 207-amino-acid chain: Protein GrpE (207 aa).

Residues 1 to 33 (MTDPNGPKDIPEQSAEAAEPVVSKPYIMPDDPE) form a disordered region.

Belongs to the GrpE family. Homodimer.

The protein localises to the cytoplasm. Functionally, participates actively in the response to hyperosmotic and heat shock by preventing the aggregation of stress-denatured proteins, in association with DnaK and GrpE. It is the nucleotide exchange factor for DnaK and may function as a thermosensor. Unfolded proteins bind initially to DnaJ; upon interaction with the DnaJ-bound protein, DnaK hydrolyzes its bound ATP, resulting in the formation of a stable complex. GrpE releases ADP from DnaK; ATP binding to DnaK triggers the release of the substrate protein, thus completing the reaction cycle. Several rounds of ATP-dependent interactions between DnaJ, DnaK and GrpE are required for fully efficient folding. This is Protein GrpE from Rhodopseudomonas palustris (strain BisA53).